Here is a 542-residue protein sequence, read N- to C-terminus: Protein XP55 (542 aa).

A signal peptide spans 1–33 (MTARRTRWTRRTDRSLPIRSAAAAVAFAAGATA). Residue cysteine 34 is the site of N-palmitoyl cysteine attachment. Residue cysteine 34 is the site of S-diacylglycerol cysteine attachment. The tract at residues 519–542 (LEGRTNTASPAGPGGTSRTGGRKK) is disordered.

Belongs to the bacterial solute-binding protein 5 family.

It is found in the cell membrane. Functionally, required for transport of an unidentified substrate. The chain is Protein XP55 (xp55) from Streptomyces lividans.